A 289-amino-acid polypeptide reads, in one-letter code: Diaminopimelate epimerase (289 aa).

The substrate site is built by N15 and N76. C85 (proton donor) is an active-site residue. Substrate-binding positions include G86–N87, N158, N191, and E209–R210. C218 (proton acceptor) is an active-site residue. G219 to T220 serves as a coordination point for substrate.

This sequence belongs to the diaminopimelate epimerase family. As to quaternary structure, homodimer.

The protein localises to the cytoplasm. The catalysed reaction is (2S,6S)-2,6-diaminopimelate = meso-2,6-diaminopimelate. The protein operates within amino-acid biosynthesis; L-lysine biosynthesis via DAP pathway; DL-2,6-diaminopimelate from LL-2,6-diaminopimelate: step 1/1. Functionally, catalyzes the stereoinversion of LL-2,6-diaminopimelate (L,L-DAP) to meso-diaminopimelate (meso-DAP), a precursor of L-lysine and an essential component of the bacterial peptidoglycan. The chain is Diaminopimelate epimerase from Streptomyces coelicolor (strain ATCC BAA-471 / A3(2) / M145).